Reading from the N-terminus, the 114-residue chain is Cytochrome c2 (114 aa).

A Pyrrolidone carboxylic acid modification is found at Gln1. 4 residues coordinate heme c: Cys13, Cys16, His17, and Met93.

It belongs to the cytochrome c family. Post-translationally, binds 1 heme c group covalently per subunit.

Its subcellular location is the periplasm. Its function is as follows. Cytochrome c2 is found mainly in purple, non-sulfur, photosynthetic bacteria where it functions as the electron donor to the oxidized bacteriochlorophyll in the photophosphorylation pathway. However, it may also have a role in the respiratory chain and is found in some non-photosynthetic bacteria. The protein is Cytochrome c2 of Rhodopseudomonas palustris.